We begin with the raw amino-acid sequence, 222 residues long: Riboflavin kinase (222 aa).

Positions 1–94 (METIDAEDAA…AKIFDVKDEQ (94 aa)) are H-T-H motif-like. Residues 95 to 222 (YVLTGTVMSG…ENSEVVVVIG (128 aa)) form a riboflavin kinase region. 104–109 (GVGEGR) contributes to the CDP binding site. Mg(2+) is bound by residues Thr133 and Asn135. The FMN site is built by Thr190 and Glu198. 203 to 206 (TQLR) is a CDP binding site.

The protein belongs to the archaeal riboflavin kinase family. Mg(2+) serves as cofactor.

It catalyses the reaction riboflavin + CTP = CDP + FMN + H(+). The protein operates within cofactor biosynthesis; FMN biosynthesis; FMN from riboflavin (CTP route): step 1/1. Catalyzes the CTP-dependent phosphorylation of riboflavin (vitamin B2) to form flavin mononucleotide (FMN). The chain is Riboflavin kinase (ribK) from Methanocorpusculum labreanum (strain ATCC 43576 / DSM 4855 / Z).